The sequence spans 483 residues: UDP-N-acetylmuramoyl-L-alanyl-D-glutamate--2,6-diaminopimelate ligase (483 aa).

Residue Ser-30 participates in UDP-N-acetyl-alpha-D-muramoyl-L-alanyl-D-glutamate binding. 109 to 115 (GTNGKTT) serves as a coordination point for ATP. Residues 151–152 (TT), Ser-178, and Arg-186 contribute to the UDP-N-acetyl-alpha-D-muramoyl-L-alanyl-D-glutamate site. Lys-218 is modified (N6-carboxylysine). Meso-2,6-diaminopimelate is bound by residues Arg-380, 403-406 (DNPR), Gly-453, and Glu-457. A Meso-diaminopimelate recognition motif motif is present at residues 403–406 (DNPR).

The protein belongs to the MurCDEF family. MurE subfamily. It depends on Mg(2+) as a cofactor. In terms of processing, carboxylation is probably crucial for Mg(2+) binding and, consequently, for the gamma-phosphate positioning of ATP.

It is found in the cytoplasm. The enzyme catalyses UDP-N-acetyl-alpha-D-muramoyl-L-alanyl-D-glutamate + meso-2,6-diaminopimelate + ATP = UDP-N-acetyl-alpha-D-muramoyl-L-alanyl-gamma-D-glutamyl-meso-2,6-diaminopimelate + ADP + phosphate + H(+). Its pathway is cell wall biogenesis; peptidoglycan biosynthesis. Its function is as follows. Catalyzes the addition of meso-diaminopimelic acid to the nucleotide precursor UDP-N-acetylmuramoyl-L-alanyl-D-glutamate (UMAG) in the biosynthesis of bacterial cell-wall peptidoglycan. The sequence is that of UDP-N-acetylmuramoyl-L-alanyl-D-glutamate--2,6-diaminopimelate ligase from Chlamydia muridarum (strain MoPn / Nigg).